Consider the following 414-residue polypeptide: COUP transcription factor 2 (414 aa).

Residues 1–72 (MAMVVSTWRD…PGGPGSDKQQ (72 aa)) are disordered. A compositionally biased stretch (pro residues) spans 27–37 (PPVPGPPPGAP). Residues 38–54 (HTPQTPGQGGPASTPAQ) are compositionally biased toward low complexity. The residue at position 51 (T51) is a Phosphothreonine. A DNA-binding region (nuclear receptor) is located at residues 76 to 151 (HIECVVCGDK…VGMRREAVQR (76 aa)). 2 consecutive NR C4-type zinc fingers follow at residues 79-99 (CVVCGDKSSGKHYGQFTCEGC) and 115-139 (CRANRNCPIDQHHRNQCQYCRLKKC). An interaction with ZFPM2 region spans residues 117–414 (ANRNCPIDQH…SFNWPYMAIQ (298 aa)). Residues 177–403 (YLSGYISLLL…TLIRDMLLSG (227 aa)) form the NR LBD domain. The tract at residues 337–414 (LQEKSQCALE…SFNWPYMAIQ (78 aa)) is important for dimerization.

This sequence belongs to the nuclear hormone receptor family. NR2 subfamily. Interacts with SQSTM1. Binds DNA as a dimer; homodimer or heterodimer with NR2F6. Interacts with NCOA1, NCOA2, NCOA3 and PPARGC1A. Interacts with ZFPM2.

The protein resides in the nucleus. Ligand-activated transcription factor. Activated by high concentrations of 9-cis-retinoic acid and all-trans-retinoic acid, but not by dexamethasone, cortisol or progesterone (in vitro). Regulation of the apolipoprotein A-I gene transcription. Binds to DNA site A. May be required to establish ovary identity during early gonad development. This chain is COUP transcription factor 2 (Nr2f2), found in Rattus norvegicus (Rat).